A 294-amino-acid polypeptide reads, in one-letter code: Aspartate carbamoyltransferase catalytic subunit (294 aa).

The carbamoyl phosphate site is built by Arg-49 and Thr-50. Position 77 (Lys-77) interacts with L-aspartate. Residues Arg-99, His-127, and Gln-130 each contribute to the carbamoyl phosphate site. Arg-161 and Arg-211 together coordinate L-aspartate. Residues Gly-250 and Pro-251 each coordinate carbamoyl phosphate.

The protein belongs to the aspartate/ornithine carbamoyltransferase superfamily. ATCase family. In terms of assembly, heterododecamer (2C3:3R2) of six catalytic PyrB chains organized as two trimers (C3), and six regulatory PyrI chains organized as three dimers (R2).

It carries out the reaction carbamoyl phosphate + L-aspartate = N-carbamoyl-L-aspartate + phosphate + H(+). The protein operates within pyrimidine metabolism; UMP biosynthesis via de novo pathway; (S)-dihydroorotate from bicarbonate: step 2/3. Functionally, catalyzes the condensation of carbamoyl phosphate and aspartate to form carbamoyl aspartate and inorganic phosphate, the committed step in the de novo pyrimidine nucleotide biosynthesis pathway. The protein is Aspartate carbamoyltransferase catalytic subunit of Sulfurovum sp. (strain NBC37-1).